Here is a 124-residue protein sequence, read N- to C-terminus: Large ribosomal subunit protein bL19 (124 aa).

The protein belongs to the bacterial ribosomal protein bL19 family.

Its function is as follows. This protein is located at the 30S-50S ribosomal subunit interface and may play a role in the structure and function of the aminoacyl-tRNA binding site. This Zymomonas mobilis subsp. mobilis (strain ATCC 31821 / ZM4 / CP4) protein is Large ribosomal subunit protein bL19.